The primary structure comprises 357 residues: bZIP transcription factor 23 (357 aa).

A disordered region spans residues 166–185 (PPVPPAPTPTAAAVPPPPPP). Positions 275-338 (VERRQRRMIK…KNEVLERMSR (64 aa)) constitute a bZIP domain. Positions 277 to 296 (RRQRRMIKNRESAARSRQRK) are basic motif. The tract at residues 303-317 (LEAEVAKLKELNDEL) is leucine-zipper.

The protein belongs to the bZIP family. ABI5 subfamily. In terms of tissue distribution, highly expressed in leaves.

Its subcellular location is the nucleus. In terms of biological role, transcriptional activator that mediates abscisic acid (ABA) signaling. Can regulate the expression of a wide spectrum of stress-related genes in response to abiotic stresses through an ABA-dependent regulation pathway. Confers ABA-dependent drought and salinity tolerance. Binds specifically to the ABA-responsive elements (ABRE) in the promoter of target genes to mediate stress-responsive ABA signaling. This Oryza sativa subsp. japonica (Rice) protein is bZIP transcription factor 23.